The primary structure comprises 450 residues: 3',5'-cyclic-AMP phosphodiesterase 7B (450 aa).

The PDEase domain maps to 97–420; it reads LDEDYLGQAR…AQWKSLLPRQ (324 aa). The active-site Proton donor is H173. Positions 177, 213, 214, and 323 each coordinate a divalent metal cation. The segment at 418–450 is disordered; sequence PRQHRSRGSSGSGPDHDHAGQGTESEEQEGDSP. S426 carries the phosphoserine modification. Over residues 441-450 the composition is skewed to acidic residues; the sequence is ESEEQEGDSP.

Belongs to the cyclic nucleotide phosphodiesterase family. PDE7 subfamily. Requires a divalent metal cation as cofactor. Highly expressed in brain. Also expressed in heart, liver, skeletal muscle and pancreas.

The enzyme catalyses 3',5'-cyclic AMP + H2O = AMP + H(+). It functions in the pathway purine metabolism; 3',5'-cyclic AMP degradation; AMP from 3',5'-cyclic AMP: step 1/1. With respect to regulation, inhibited by dipyridamole, IBMX and SCH 51866. Insensitive to zaprinast, rolipram, and milrinone. Hydrolyzes the second messenger cAMP, which is a key regulator of many important physiological processes. May be involved in the control of cAMP-mediated neural activity and cAMP metabolism in the brain. This chain is 3',5'-cyclic-AMP phosphodiesterase 7B, found in Homo sapiens (Human).